A 491-amino-acid polypeptide reads, in one-letter code: Glutamyl-tRNA(Gln) amidotransferase subunit A (491 aa).

Residues K76 and S154 each act as charge relay system in the active site. The Acyl-ester intermediate role is filled by S178.

This sequence belongs to the amidase family. GatA subfamily. As to quaternary structure, heterotrimer of A, B and C subunits.

The enzyme catalyses L-glutamyl-tRNA(Gln) + L-glutamine + ATP + H2O = L-glutaminyl-tRNA(Gln) + L-glutamate + ADP + phosphate + H(+). Allows the formation of correctly charged Gln-tRNA(Gln) through the transamidation of misacylated Glu-tRNA(Gln) in organisms which lack glutaminyl-tRNA synthetase. The reaction takes place in the presence of glutamine and ATP through an activated gamma-phospho-Glu-tRNA(Gln). This is Glutamyl-tRNA(Gln) amidotransferase subunit A from Cereibacter sphaeroides (strain ATCC 17023 / DSM 158 / JCM 6121 / CCUG 31486 / LMG 2827 / NBRC 12203 / NCIMB 8253 / ATH 2.4.1.) (Rhodobacter sphaeroides).